Here is a 427-residue protein sequence, read N- to C-terminus: Gamma-glutamyl phosphate reductase (427 aa).

This sequence belongs to the gamma-glutamyl phosphate reductase family.

The protein resides in the cytoplasm. The enzyme catalyses L-glutamate 5-semialdehyde + phosphate + NADP(+) = L-glutamyl 5-phosphate + NADPH + H(+). It functions in the pathway amino-acid biosynthesis; L-proline biosynthesis; L-glutamate 5-semialdehyde from L-glutamate: step 2/2. In terms of biological role, catalyzes the NADPH-dependent reduction of L-glutamate 5-phosphate into L-glutamate 5-semialdehyde and phosphate. The product spontaneously undergoes cyclization to form 1-pyrroline-5-carboxylate. This chain is Gamma-glutamyl phosphate reductase, found in Anaeromyxobacter dehalogenans (strain 2CP-1 / ATCC BAA-258).